We begin with the raw amino-acid sequence, 285 residues long: MASTGQTNNYKQGYSSQTVETQQTRRAESEAAFLLPYIKKTDYILDVGCGPGTITVGFVKYASEGRTIGIDISANVLGRAKAAADEASIPKEGPGSIIFEEGNILEGLAYPDNTFDIVFCAHTLGYMPPPDMPLKALTEMRRVLKPGGILATRDTIEQHFYPRSMDLDRLWVGHFRRAVLKGDPEAEDLSPPFMPALFRRAGFDADGGKVHISTGSTVFSGATTRQWLANRAESQLQPGDPLRRSWLEAGITEDEIHETLLASKKWAETEDAWYAALHCDMLAWK.

The segment at 1 to 22 is disordered; the sequence is MASTGQTNNYKQGYSSQTVETQ.

The protein belongs to the class I-like SAM-binding methyltransferase superfamily. In terms of assembly, monomer.

Its function is as follows. Probable methyltransferase; part of the gene cluster that mediates the biosynthesis of luteodienoside A, a glycosylated polyketide consisting of an unusual 1-O-beta-D-glucopyranosyl-myo-inositol (glucinol) ester of 3-hydroxy-2,2,4-trimethylocta-4,6-dienoic acid. The HR-PKS ltbA produces the trimethylated polyketide chain from acetyl-CoA, malonyl-CoA and S-adenosylmethionine (SAM), and the ltbA cAT domain then uses glucinol produced by the glycosyltransferase ltbB as an offloading substrate to release luteodienoside A. Since ltbA and ltbB are sufficient for the biosynthesis of luteodienoside A, the functions of the methyltransferase ltbC and the FAD-binding monooxygenase ltbD within the pathway remain obscur. The sequence is that of Probable methyltransferase ltbC from Aspergillus luteorubrus.